The primary structure comprises 498 residues: Protein flp (498 aa).

The next 4 membrane-spanning stretches (helical) occupy residues 6 to 26, 389 to 409, 433 to 453, and 471 to 491; these read LYFLSISIIIIVAISIAIYIT, FNIVTVLMTTLILLAFIFSAY, LSLCICIALALILYALPYLIL, and LALITTLIALFSTLIVILLFL.

The protein localises to the cell membrane. Its precise function is unknown. Has no penicillin-binding activity and is not involved in methicillin resistance. In Staphylococcus aureus (strain COL), this protein is Protein flp (flp).